We begin with the raw amino-acid sequence, 535 residues long: GMP synthase [glutamine-hydrolyzing] (535 aa).

Residues 24-217 (KILIVDFGSQ…VRKVAGLTGD (194 aa)) form the Glutamine amidotransferase type-1 domain. Cys101 (nucleophile) is an active-site residue. Residues His191 and Glu193 contribute to the active site. One can recognise a GMPS ATP-PPase domain in the interval 218-410 (WTMRAFREEA…LGLPEIFVGR (193 aa)). 245-251 (SGGVDSS) contacts ATP.

As to quaternary structure, homodimer.

It carries out the reaction XMP + L-glutamine + ATP + H2O = GMP + L-glutamate + AMP + diphosphate + 2 H(+). It participates in purine metabolism; GMP biosynthesis; GMP from XMP (L-Gln route): step 1/1. Its function is as follows. Catalyzes the synthesis of GMP from XMP. The polypeptide is GMP synthase [glutamine-hydrolyzing] (Nitrobacter winogradskyi (strain ATCC 25391 / DSM 10237 / CIP 104748 / NCIMB 11846 / Nb-255)).